Consider the following 202-residue polypeptide: Imidazoleglycerol-phosphate dehydratase (202 aa).

Belongs to the imidazoleglycerol-phosphate dehydratase family.

The protein resides in the cytoplasm. The catalysed reaction is D-erythro-1-(imidazol-4-yl)glycerol 3-phosphate = 3-(imidazol-4-yl)-2-oxopropyl phosphate + H2O. Its pathway is amino-acid biosynthesis; L-histidine biosynthesis; L-histidine from 5-phospho-alpha-D-ribose 1-diphosphate: step 6/9. The polypeptide is Imidazoleglycerol-phosphate dehydratase (Salinibacter ruber (strain DSM 13855 / M31)).